A 180-amino-acid chain; its full sequence is Ribulose bisphosphate carboxylase small subunit, chloroplastic 3 (180 aa).

A chloroplast-targeting transit peptide spans 1 to 56 (MASSLMSNAITAVVGASGAQANMVAPFNGLKSIASFPVTRKSNDITSIASNGGRVQ).

This sequence belongs to the RuBisCO small chain family. As to quaternary structure, heterohexadecamer of 8 large and 8 small subunits.

The protein localises to the plastid. It localises to the chloroplast. In terms of biological role, ruBisCO catalyzes two reactions: the carboxylation of D-ribulose 1,5-bisphosphate, the primary event in carbon dioxide fixation, as well as the oxidative fragmentation of the pentose substrate. Both reactions occur simultaneously and in competition at the same active site. Although the small subunit is not catalytic it is essential for maximal activity. The chain is Ribulose bisphosphate carboxylase small subunit, chloroplastic 3 from Amaranthus hypochondriacus (Prince-of-Wales feather).